A 290-amino-acid polypeptide reads, in one-letter code: PIH1 domain-containing protein 1 (290 aa).

Residues Ser12 and Ser173 each carry the phosphoserine modification.

The protein belongs to the PIH1 family. Component of the R2TP complex composed at least of RUVBL1, RUVBL2, RPAP3 and PIHD1. Component of the PAQosome complex which is responsible for the biogenesis of several protein complexes and which consists of R2TP complex members RUVBL1, RUVBL2, RPAP3 and PIH1D1, URI complex members PFDN2, PFDN6, PDRG1, UXT and URI1 as well as ASDURF, POLR2E and DNAAF10/WDR92. Interacts with phosphorylated TELO2 and mediates interaction of TELO2 with the R2TP complex. Interacts with phosphorylated ECD, EFTUD2/SNRP116, RPB1 and UBR5 and with RPB1 in a phosphorylation-independent manner. Interacts with the core C/D box snoRNP particle components NOP58 and FBL and with RUVBL1/TIP49. Interacts with RPAP3 and DNAAF10. Interacts with histone H4 and with SWI/SNF complex member SMARCB1/SNF5. Interacts with the mTORC1 complex member RPTOR. Interacts with MSL1. Expressed at low levels in normal mammary epithelial cells (at protein level). Highest expression in lung, leukocyte and placenta. Expressed at lower levels in brain, prostate, colon, heart, small intestine, liver, ovary, pancreas, skeletal muscle, spleen, testis and thymus.

Its subcellular location is the nucleus. Functionally, involved in the assembly of C/D box small nucleolar ribonucleoprotein (snoRNP) particles. Recruits the SWI/SNF complex to the core promoter of rRNA genes and enhances pre-rRNA transcription. Mediates interaction of TELO2 with the R2TP complex which is necessary for the stability of MTOR and SMG1. Positively regulates the assembly and activity of the mTORC1 complex. The polypeptide is PIH1 domain-containing protein 1 (PIH1D1) (Homo sapiens (Human)).